A 153-amino-acid chain; its full sequence is UPF0179 protein AF_2154 (153 aa).

The protein belongs to the UPF0179 family.

The protein is UPF0179 protein AF_2154 of Archaeoglobus fulgidus (strain ATCC 49558 / DSM 4304 / JCM 9628 / NBRC 100126 / VC-16).